A 451-amino-acid polypeptide reads, in one-letter code: Probable V-type proton ATPase subunit H 1 (451 aa).

Belongs to the V-ATPase H subunit family. As to quaternary structure, V-ATPase is a heteromultimeric enzyme made up of two complexes: the ATP-hydrolytic V1 complex and the proton translocation V0 complex. The V1 complex consists of three catalytic AB heterodimers that form a heterohexamer, three peripheral stalks each consisting of EG heterodimers, one central rotor including subunits D and F, and the regulatory subunits C and H. The proton translocation complex V0 consists of the proton transport subunit a, a ring of proteolipid subunits c9c'', rotary subunit d, subunits e and f, and the accessory subunits vah-19/Ac45 and vah-20/PRR.

Subunit of the V1 complex of vacuolar(H+)-ATPase (V-ATPase), a multisubunit enzyme composed of a peripheral complex (V1) that hydrolyzes ATP and a membrane integral complex (V0) that translocates protons. V-ATPase is responsible for acidifying and maintaining the pH of intracellular compartments and in some cell types, is targeted to the plasma membrane, where it is responsible for acidifying the extracellular environment. Subunit H is essential for V-ATPase activity, but not for the assembly of the complex. The chain is Probable V-type proton ATPase subunit H 1 from Caenorhabditis elegans.